Consider the following 65-residue polypeptide: DNA-directed RNA polymerase subunit omega (65 aa).

Belongs to the RNA polymerase subunit omega family. As to quaternary structure, the RNAP catalytic core consists of 2 alpha, 1 beta, 1 beta' and 1 omega subunit. When a sigma factor is associated with the core the holoenzyme is formed, which can initiate transcription.

The catalysed reaction is RNA(n) + a ribonucleoside 5'-triphosphate = RNA(n+1) + diphosphate. In terms of biological role, promotes RNA polymerase assembly. Latches the N- and C-terminal regions of the beta' subunit thereby facilitating its interaction with the beta and alpha subunits. This is DNA-directed RNA polymerase subunit omega from Baumannia cicadellinicola subsp. Homalodisca coagulata.